The sequence spans 262 residues: Hydroxyethylthiazole kinase (262 aa).

M50 serves as a coordination point for substrate. Residues R125 and T171 each contribute to the ATP site. G198 lines the substrate pocket.

The protein belongs to the Thz kinase family. The cofactor is Mg(2+).

The enzyme catalyses 5-(2-hydroxyethyl)-4-methylthiazole + ATP = 4-methyl-5-(2-phosphooxyethyl)-thiazole + ADP + H(+). The protein operates within cofactor biosynthesis; thiamine diphosphate biosynthesis; 4-methyl-5-(2-phosphoethyl)-thiazole from 5-(2-hydroxyethyl)-4-methylthiazole: step 1/1. In terms of biological role, catalyzes the phosphorylation of the hydroxyl group of 4-methyl-5-beta-hydroxyethylthiazole (THZ). The chain is Hydroxyethylthiazole kinase from Escherichia coli O81 (strain ED1a).